Consider the following 390-residue polypeptide: Probable inactive secreted aspartyl protease (390 aa).

A signal peptide spans 1–20 (MQLTIKALVGILTTISAATA). A propeptide spans 21–69 (VSFDMENLGAEKRGVSGEELHMLHGNEVLARFANGVYPEVANGTRVSKR) (removed in mature form). Residue asparagine 62 is glycosylated (N-linked (GlcNAc...) asparagine). Residues 86–388 (WAVKAKIGSN…KFDSNEMQIA (303 aa)) enclose the Peptidase A1 domain. Residues aspartate 104 and aspartate 273 contribute to the active site. Cysteine 313 and cysteine 346 are joined by a disulfide.

It belongs to the peptidase A1 family.

Its subcellular location is the secreted. Probable inactive secreted aspartyl protease. May promote an inflammatory immune response in the host when the host skin barrier is breached. Has no detectable protease activity in vitro on fluorogenic substrates, a peptide library, or with the general protease substrate casein. The presence of the enzyme also does not affect the activity of the secreted aspartyl protease SAP1. This chain is Probable inactive secreted aspartyl protease, found in Malassezia globosa (strain ATCC MYA-4612 / CBS 7966) (Dandruff-associated fungus).